We begin with the raw amino-acid sequence, 244 residues long: MEKEDNGSKQSSSASVVSSRRRRRVVEPVEATLQRWEEEGLARARRVQAKGSKKGCMRGKGGPENPVCRFRGVRQRVWGKWVAEIREPVSHRGANSSRSKRLWLGTFATAAEAALAYDRAASVMYGPYARLNFPEDLGGGRKKDEEAESSGGYWLETNKAGNGVIETEGGKDYVVYNEDAIELGHDKTQNPMTDNEIVNPAVKSEEGYSYDRFKLDNGLLYNEPQSSSYHQGGGFDSYFEYFRF.

The interval 1–25 is disordered; it reads MEKEDNGSKQSSSASVVSSRRRRRV. The Nuclear localization signal motif lies at 20-46; sequence RRRRRVVEPVEATLQRWEEEGLARARR. A DNA-binding region (AP2/ERF) is located at residues 69–134; sequence RFRGVRQRVW…YGPYARLNFP (66 aa).

The protein belongs to the AP2/ERF transcription factor family. ERF subfamily. As to expression, expressed in xylem tissues, stigma, anthers and region where sepals and petals attach the peduncle.

It localises to the nucleus. Its function is as follows. Transcriptional activator that binds specifically to the DNA sequence 5'-[AG]CCGAC-3'. Binding to the C-repeat/DRE element mediates abscisic acid-inducible transcription. Involved in the regulation of plant development and tolerance to abiotic stresses. This Arabidopsis thaliana (Mouse-ear cress) protein is Dehydration-responsive element-binding protein 2E (DREB2E).